The sequence spans 233 residues: MILIASPFSLAHLEYLHTWHVTIKNIAQQHGLDIKVAIVVSTSHLNNFLPISGALNIECITFPSCGIKEIDLLWARIKLFQHYCAIGARLLWLVSADIRPPVSAWPAIADSLKKGADAVVIPYPSRWNNLIPTVIKEIVVHQKKCLVAVDARHLDTDTQIVGAGMGCIVLTLKALMVRLSIGKQPVKILWPDLHGTAEGIPLEGVEVGWFLNAYAHKLNIRCLGADHIAQHLT.

Belongs to the asfivirus H233R family.

This is an uncharacterized protein from African swine fever virus (strain Badajoz 1971 Vero-adapted) (Ba71V).